The chain runs to 767 residues: Protein hunchback (767 aa).

Disordered regions lie at residues 30-51, 105-127, and 174-212; these read EPGH…PIPS, QQQY…HLMG, and EKLQ…SNSS. The segment covering 39–51 has biased composition (polar residues); sequence SVASSPRQSPIPS. The span at 105-117 shows a compositional bias: low complexity; it reads QQQYQQHFQAAQQ. The span at 200-212 shows a compositional bias: basic and acidic residues; the sequence is EPEKEHDQMSNSS. 4 consecutive C2H2-type zinc fingers follow at residues 242 to 264, 271 to 293, 299 to 321, and 327 to 351; these read YKCK…TRTH, LQCP…IRKH, FQCD…RKSH, and YRCA…KYGH. 3 disordered regions span residues 357 to 424, 518 to 570, and 610 to 704; these read LDED…TSQL, QLQQ…QPQQ, and GVMT…APPS. Positions 386-397 are enriched in gly residues; the sequence is IASGGSGSGSGS. A compositionally biased stretch (low complexity) spans 518-527; it reads QLQQQNQQQS. Acidic residues predominate over residues 528–537; sequence DNEEEEQDDE. Positions 661–704 are enriched in low complexity; sequence ANTSASSTASSSGNSSNASSNSNGNSSSNSSSSGTNSAAAAPPS. 2 consecutive C2H2-type zinc fingers follow at residues 714 to 736 and 742 to 766; these read YECK…MGYH and FKCN…RNAH.

The protein belongs to the hunchback C2H2-type zinc-finger protein family.

The protein resides in the nucleus. Gap class segmentation protein that controls development of head structures. This Drosophila orena (Fruit fly) protein is Protein hunchback (hb).